A 189-amino-acid polypeptide reads, in one-letter code: Large ribosomal subunit protein bL9 (189 aa).

This sequence belongs to the bacterial ribosomal protein bL9 family.

Its function is as follows. Binds to the 23S rRNA. This is Large ribosomal subunit protein bL9 from Brucella abortus (strain S19).